The sequence spans 363 residues: Histidinol-phosphate aminotransferase (363 aa).

Lys218 is modified (N6-(pyridoxal phosphate)lysine).

This sequence belongs to the class-II pyridoxal-phosphate-dependent aminotransferase family. Histidinol-phosphate aminotransferase subfamily. Homodimer. The cofactor is pyridoxal 5'-phosphate.

It catalyses the reaction L-histidinol phosphate + 2-oxoglutarate = 3-(imidazol-4-yl)-2-oxopropyl phosphate + L-glutamate. Its pathway is amino-acid biosynthesis; L-histidine biosynthesis; L-histidine from 5-phospho-alpha-D-ribose 1-diphosphate: step 7/9. The polypeptide is Histidinol-phosphate aminotransferase (Xanthomonas oryzae pv. oryzae (strain MAFF 311018)).